A 413-amino-acid polypeptide reads, in one-letter code: L-cysteine:1D-myo-inositol 2-amino-2-deoxy-alpha-D-glucopyranoside ligase (413 aa).

A disordered region spans residues 1–21; sequence MQSWSDTALPSVPGQGPPLRL. Cys43 contributes to the Zn(2+) binding site. Residues 43-46, Thr58, and 81-83 each bind L-cysteinyl-5'-AMP; these read CGIT and NVT. The 'HIGH' region signature appears at 45-55; the sequence is ITPYDATHLGH. A 'ERGGDP' region motif is present at residues 187-192; it reads ERGGDP. Trp227 contacts L-cysteinyl-5'-AMP. Cys231 lines the Zn(2+) pocket. An L-cysteinyl-5'-AMP-binding site is contributed by 249–251; that stretch reads GSD. A Zn(2+)-binding site is contributed by His256. An L-cysteinyl-5'-AMP-binding site is contributed by Ile283. A 'KMSKS' region motif is present at residues 289-293; the sequence is KMSKS.

This sequence belongs to the class-I aminoacyl-tRNA synthetase family. MshC subfamily. In terms of assembly, monomer. Zn(2+) serves as cofactor.

It catalyses the reaction 1D-myo-inositol 2-amino-2-deoxy-alpha-D-glucopyranoside + L-cysteine + ATP = 1D-myo-inositol 2-(L-cysteinylamino)-2-deoxy-alpha-D-glucopyranoside + AMP + diphosphate + H(+). In terms of biological role, catalyzes the ATP-dependent condensation of GlcN-Ins and L-cysteine to form L-Cys-GlcN-Ins. This chain is L-cysteine:1D-myo-inositol 2-amino-2-deoxy-alpha-D-glucopyranoside ligase, found in Rhodococcus erythropolis (strain PR4 / NBRC 100887).